The primary structure comprises 391 residues: 3-ketoacyl-CoA thiolase (391 aa).

The Acyl-thioester intermediate role is filled by Cys-95. Active-site proton acceptor residues include His-347 and Cys-377.

This sequence belongs to the thiolase-like superfamily. Thiolase family. Heterotetramer of two alpha chains (FadB) and two beta chains (FadA).

The protein resides in the cytoplasm. It carries out the reaction an acyl-CoA + acetyl-CoA = a 3-oxoacyl-CoA + CoA. Its pathway is lipid metabolism; fatty acid beta-oxidation. Functionally, catalyzes the final step of fatty acid oxidation in which acetyl-CoA is released and the CoA ester of a fatty acid two carbons shorter is formed. This chain is 3-ketoacyl-CoA thiolase, found in Pseudomonas fluorescens (strain ATCC BAA-477 / NRRL B-23932 / Pf-5).